Reading from the N-terminus, the 1445-residue chain is DNA-directed RNA polymerase subunit beta'' (1445 aa).

Zn(2+) contacts are provided by cysteine 220, cysteine 293, cysteine 300, and cysteine 303.

It belongs to the RNA polymerase beta' chain family. RpoC2 subfamily. In terms of assembly, in plastids the minimal PEP RNA polymerase catalytic core is composed of four subunits: alpha, beta, beta', and beta''. When a (nuclear-encoded) sigma factor is associated with the core the holoenzyme is formed, which can initiate transcription. Zn(2+) is required as a cofactor.

Its subcellular location is the plastid. The protein resides in the chloroplast. The enzyme catalyses RNA(n) + a ribonucleoside 5'-triphosphate = RNA(n+1) + diphosphate. Its function is as follows. DNA-dependent RNA polymerase catalyzes the transcription of DNA into RNA using the four ribonucleoside triphosphates as substrates. This is DNA-directed RNA polymerase subunit beta'' from Anthoceros angustus (Hornwort).